Reading from the N-terminus, the 167-residue chain is ATP synthase subunit b (167 aa).

A helical membrane pass occupies residues serine 7 to alanine 25.

Belongs to the ATPase B chain family. F-type ATPases have 2 components, F(1) - the catalytic core - and F(0) - the membrane proton channel. F(1) has five subunits: alpha(3), beta(3), gamma(1), delta(1), epsilon(1). F(0) has three main subunits: a(1), b(2) and c(10-14). The alpha and beta chains form an alternating ring which encloses part of the gamma chain. F(1) is attached to F(0) by a central stalk formed by the gamma and epsilon chains, while a peripheral stalk is formed by the delta and b chains.

The protein resides in the cell inner membrane. Functionally, f(1)F(0) ATP synthase produces ATP from ADP in the presence of a proton or sodium gradient. F-type ATPases consist of two structural domains, F(1) containing the extramembraneous catalytic core and F(0) containing the membrane proton channel, linked together by a central stalk and a peripheral stalk. During catalysis, ATP synthesis in the catalytic domain of F(1) is coupled via a rotary mechanism of the central stalk subunits to proton translocation. Its function is as follows. Component of the F(0) channel, it forms part of the peripheral stalk, linking F(1) to F(0). The chain is ATP synthase subunit b from Rickettsia typhi (strain ATCC VR-144 / Wilmington).